Consider the following 422-residue polypeptide: Serine--tRNA ligase (422 aa).

An L-serine-binding site is contributed by 231 to 233; the sequence is TAE. An ATP-binding site is contributed by 261-263; sequence RSE. Glutamate 284 lines the L-serine pocket. 348-351 is an ATP binding site; the sequence is EISS. Serine 383 contacts L-serine.

Belongs to the class-II aminoacyl-tRNA synthetase family. Type-1 seryl-tRNA synthetase subfamily. In terms of assembly, homodimer. The tRNA molecule binds across the dimer.

The protein localises to the cytoplasm. The catalysed reaction is tRNA(Ser) + L-serine + ATP = L-seryl-tRNA(Ser) + AMP + diphosphate + H(+). It catalyses the reaction tRNA(Sec) + L-serine + ATP = L-seryl-tRNA(Sec) + AMP + diphosphate + H(+). It participates in aminoacyl-tRNA biosynthesis; selenocysteinyl-tRNA(Sec) biosynthesis; L-seryl-tRNA(Sec) from L-serine and tRNA(Sec): step 1/1. In terms of biological role, catalyzes the attachment of serine to tRNA(Ser). Is also able to aminoacylate tRNA(Sec) with serine, to form the misacylated tRNA L-seryl-tRNA(Sec), which will be further converted into selenocysteinyl-tRNA(Sec). The protein is Serine--tRNA ligase of Mycoplasmopsis agalactiae (strain NCTC 10123 / CIP 59.7 / PG2) (Mycoplasma agalactiae).